Reading from the N-terminus, the 80-residue chain is Lantibiotic Flvalpha.c (80 aa).

Residues 1 to 38 (MNKNPIYRSEEEAKNIACGNVAAELDENSQALDAINGA) constitute a propeptide, cleaved by FlvT. 2 positions are modified to 2,3-didehydrobutyrine; by FlvM1: Thr-43 and Thr-47. The segment at residues 52-55 (TLGC) is a cross-link (beta-methyllanthionine (Thr-Cys); by FlvM1). The lanthionine (Ser-Cys); by FlvM1 cross-link spans 58–68 (SYGLGNGGYCC). 2 cross-links (beta-methyllanthionine (Thr-Cys); by FlvM1) span residues 69–74 (TYTVEC) and 71–78 (TVECSKTC).

Post-translationally, the lanthionine formed by Ser-58 and Cys-68 forms a putative lipid II binding motif. Maturation of FlvA1 peptides involves the enzymatic conversion of Thr, and Ser into dehydrated AA and the formation of thioether bonds with cysteines. Modifications are processed by the flavecin synthetase FlvM1. This is followed by membrane translocation and cleavage of the modified precursor. In terms of processing, contains DL-lanthionine and DL-beta-methyllanthionine, when coepressed in E.coli with the flavecin synthetase FlvM1.

It is found in the secreted. In terms of biological role, lanthionine-containing peptide antibiotic (lantibiotic) only active on Gram-positive bacteria in synergy with Flvbeta peptides, which are encoded by the same operon than Flvalpha.a. Shows antibacterial activity in synergy with Flvbeta.b, Flvbeta.c, Flvbeta.e and Flvbeta.g. Does not show antibacterial activity when tested with Flvbeta.a, Flvbeta.d, Flvbeta.f and Flvbeta.h. The bactericidal activity of lantibiotics is based on depolarization of energized bacterial cytoplasmic membranes, initiated by the formation of aqueous transmembrane pores. This Ruminococcus flavefaciens protein is Lantibiotic Flvalpha.c.